The chain runs to 97 residues: Co-chaperonin GroES (97 aa).

This sequence belongs to the GroES chaperonin family. As to quaternary structure, heptamer of 7 subunits arranged in a ring. Interacts with the chaperonin GroEL.

Its subcellular location is the cytoplasm. Functionally, together with the chaperonin GroEL, plays an essential role in assisting protein folding. The GroEL-GroES system forms a nano-cage that allows encapsulation of the non-native substrate proteins and provides a physical environment optimized to promote and accelerate protein folding. GroES binds to the apical surface of the GroEL ring, thereby capping the opening of the GroEL channel. This Pseudomonas putida (strain W619) protein is Co-chaperonin GroES.